Consider the following 84-residue polypeptide: Alpha-mammal toxin Aah3 (84 aa).

The signal sequence occupies residues 1–19 (MNYLVMISLALLLMTGVES). The LCN-type CS-alpha/beta domain maps to 21–82 (RDGYIVDSKN…PIKDPSYKCH (62 aa)). Cystine bridges form between cysteine 31–cysteine 81, cysteine 35–cysteine 53, cysteine 39–cysteine 63, and cysteine 43–cysteine 65. Arginine 84 is a propeptide (removed by a carboxypeptidase).

The protein belongs to the long (4 C-C) scorpion toxin superfamily. Sodium channel inhibitor family. Alpha subfamily. Expressed by the venom gland.

The protein resides in the secreted. In terms of biological role, alpha toxins bind voltage-independently at site-3 of sodium channels (Nav) and inhibit the inactivation of the activated channels, thereby blocking neuronal transmission. The sequence is that of Alpha-mammal toxin Aah3 from Androctonus australis (Sahara scorpion).